The primary structure comprises 634 residues: Probable potassium transport system protein Kup 1 (634 aa).

12 helical membrane-spanning segments follow: residues F20–L40, V64–I84, F110–I130, P148–V168, V176–I196, A224–A244, F256–M276, F290–I310, I348–F368, A377–M397, V405–A425, and I430–T450.

It belongs to the HAK/KUP transporter (TC 2.A.72) family.

Its subcellular location is the cell inner membrane. The enzyme catalyses K(+)(in) + H(+)(in) = K(+)(out) + H(+)(out). Its function is as follows. Transport of potassium into the cell. Likely operates as a K(+):H(+) symporter. The protein is Probable potassium transport system protein Kup 1 of Rhodopseudomonas palustris (strain BisB5).